The primary structure comprises 410 residues: Multifunctional CCA protein (410 aa).

The ATP site is built by glycine 8 and arginine 11. Glycine 8 and arginine 11 together coordinate CTP. Mg(2+)-binding residues include glutamate 21 and aspartate 23. 3 residues coordinate ATP: arginine 91, arginine 137, and arginine 140. 3 residues coordinate CTP: arginine 91, arginine 137, and arginine 140. In terms of domain architecture, HD spans 228–329 (TGIHSLMALR…VKLLEQVDAF (102 aa)).

Belongs to the tRNA nucleotidyltransferase/poly(A) polymerase family. Bacterial CCA-adding enzyme type 1 subfamily. Monomer. Can also form homodimers and oligomers. The cofactor is Mg(2+). Requires Ni(2+) as cofactor.

The enzyme catalyses a tRNA precursor + 2 CTP + ATP = a tRNA with a 3' CCA end + 3 diphosphate. The catalysed reaction is a tRNA with a 3' CCA end + 2 CTP + ATP = a tRNA with a 3' CCACCA end + 3 diphosphate. Functionally, catalyzes the addition and repair of the essential 3'-terminal CCA sequence in tRNAs without using a nucleic acid template. Adds these three nucleotides in the order of C, C, and A to the tRNA nucleotide-73, using CTP and ATP as substrates and producing inorganic pyrophosphate. tRNA 3'-terminal CCA addition is required both for tRNA processing and repair. Also involved in tRNA surveillance by mediating tandem CCA addition to generate a CCACCA at the 3' terminus of unstable tRNAs. While stable tRNAs receive only 3'-terminal CCA, unstable tRNAs are marked with CCACCA and rapidly degraded. This is Multifunctional CCA protein from Legionella pneumophila (strain Paris).